The primary structure comprises 365 residues: tRNA-specific 2-thiouridylase MnmA (365 aa).

Residues 14-21 (AMSGGVDS) and L40 each bind ATP. C108 acts as the Nucleophile in catalysis. A disulfide bond links C108 and C204. G132 provides a ligand contact to ATP. The tract at residues 154–156 (KDQ) is interaction with tRNA. The active-site Cysteine persulfide intermediate is the C204.

Belongs to the MnmA/TRMU family.

The protein localises to the cytoplasm. The catalysed reaction is S-sulfanyl-L-cysteinyl-[protein] + uridine(34) in tRNA + AH2 + ATP = 2-thiouridine(34) in tRNA + L-cysteinyl-[protein] + A + AMP + diphosphate + H(+). In terms of biological role, catalyzes the 2-thiolation of uridine at the wobble position (U34) of tRNA, leading to the formation of s(2)U34. In Rickettsia massiliae (strain Mtu5), this protein is tRNA-specific 2-thiouridylase MnmA.